The chain runs to 350 residues: Glycerol-1-phosphate dehydrogenase [NAD(P)+] (350 aa).

Residues 96 to 100 (GNIID) and 118 to 121 (TAPS) contribute to the NAD(+) site. Aspartate 123 is a binding site for substrate. Position 127 (serine 127) interacts with NAD(+). Aspartate 170 contributes to the substrate binding site. Aspartate 170 and histidine 250 together coordinate Zn(2+). Histidine 254 is a binding site for substrate. Histidine 266 lines the Zn(2+) pocket.

It belongs to the glycerol-1-phosphate dehydrogenase family. In terms of assembly, homodimer. The cofactor is Zn(2+).

It localises to the cytoplasm. It catalyses the reaction sn-glycerol 1-phosphate + NAD(+) = dihydroxyacetone phosphate + NADH + H(+). The enzyme catalyses sn-glycerol 1-phosphate + NADP(+) = dihydroxyacetone phosphate + NADPH + H(+). Its pathway is membrane lipid metabolism; glycerophospholipid metabolism. Functionally, catalyzes the NAD(P)H-dependent reduction of dihydroxyacetonephosphate (DHAP or glycerone phosphate) to glycerol 1-phosphate (G1P). The G1P thus generated is used as the glycerophosphate backbone of phospholipids in the cellular membranes of Archaea. The polypeptide is Glycerol-1-phosphate dehydrogenase [NAD(P)+] (Sulfurisphaera tokodaii (strain DSM 16993 / JCM 10545 / NBRC 100140 / 7) (Sulfolobus tokodaii)).